Consider the following 188-residue polypeptide: Ubiquitin-like protein 4B (188 aa).

One can recognise a Ubiquitin-like domain in the interval 1 to 76 (MFLTVKLLLG…INVIMRPPED (76 aa)). The disordered stretch occupies residues 146 to 188 (EEKEAPAVASELEQNNGGGGGGGGTGGEGGGKKEEEEGEEADQ). The segment covering 161 to 174 (NGGGGGGGGTGGEG) has biased composition (gly residues).

Expressed specifically in post-meiotic male germ cells of the testis. Abundantly expressed in stage 14-16 spermatids.

The protein localises to the cytoplasm. This is Ubiquitin-like protein 4B (Ubl4b) from Mus musculus (Mouse).